The chain runs to 313 residues: Fructose-1,6-bisphosphatase class 1 (313 aa).

Residues Glu-90, Asp-111, Leu-113, and Asp-114 each coordinate Mg(2+). Residues 114 to 117, Tyr-222, and Lys-253 each bind substrate; that span reads DGSS. Glu-259 contacts Mg(2+).

It belongs to the FBPase class 1 family. Homotetramer. Mg(2+) serves as cofactor.

Its subcellular location is the cytoplasm. The catalysed reaction is beta-D-fructose 1,6-bisphosphate + H2O = beta-D-fructose 6-phosphate + phosphate. It participates in carbohydrate biosynthesis; gluconeogenesis. The chain is Fructose-1,6-bisphosphatase class 1 from Geotalea uraniireducens (strain Rf4) (Geobacter uraniireducens).